Consider the following 490-residue polypeptide: ATP synthase subunit beta, chloroplastic (490 aa).

Gly-170–Thr-177 is a binding site for ATP.

This sequence belongs to the ATPase alpha/beta chains family. In terms of assembly, F-type ATPases have 2 components, CF(1) - the catalytic core - and CF(0) - the membrane proton channel. CF(1) has five subunits: alpha(3), beta(3), gamma(1), delta(1), epsilon(1). CF(0) has four main subunits: a(1), b(1), b'(1) and c(9-12).

It is found in the plastid. It localises to the chloroplast thylakoid membrane. It catalyses the reaction ATP + H2O + 4 H(+)(in) = ADP + phosphate + 5 H(+)(out). Its function is as follows. Produces ATP from ADP in the presence of a proton gradient across the membrane. The catalytic sites are hosted primarily by the beta subunits. The polypeptide is ATP synthase subunit beta, chloroplastic (Convolvulus arvensis (Field bindweed)).